We begin with the raw amino-acid sequence, 283 residues long: Interferon alpha-inducible protein 27-like protein 2B (283 aa).

The N-terminal 90 residues, 1–90 (MKRKFVGAAI…AVGTATGARA (90 aa)), are a transit peptide targeting the mitochondrion. The interval 90–120 (AEGSMGASREQESGPQDPPQELQEPQEPPSC) is disordered. Transmembrane regions (helical) follow at residues 130–150 (FVGAAIGGALAVAGAPIALSA), 176–196 (GGGIAAGGLVATLQSVGILGL), and 202–222 (IILGAVGAATGATAAGAMGAC). The segment at 227 to 283 (PGLQDLQQEPKEPQEPQELQKQQEPQEPQELQKQQETQETQETQELQKTQEPPSYEK) is disordered. Positions 242 to 283 (PQELQKQQEPQEPQELQKQQETQETQETQELQKTQEPPSYEK) are enriched in low complexity.

This sequence belongs to the IFI6/IFI27 family. As to quaternary structure, homooligomer. Interacts with BAK1. Interacts with BAX. Interacts with adenine nucleotide translocase.

The protein resides in the mitochondrion inner membrane. In terms of biological role, functions in the intrinsic apoptotic signaling pathway and may have an interferon-induced antiviral activity. The chain is Interferon alpha-inducible protein 27-like protein 2B from Mus musculus (Mouse).